Reading from the N-terminus, the 89-residue chain is Small ribosomal subunit protein uS14A (89 aa).

This sequence belongs to the universal ribosomal protein uS14 family. As to quaternary structure, part of the 30S ribosomal subunit. Contacts proteins S3 and S10.

In terms of biological role, binds 16S rRNA, required for the assembly of 30S particles and may also be responsible for determining the conformation of the 16S rRNA at the A site. This is Small ribosomal subunit protein uS14A from Levilactobacillus brevis (strain ATCC 367 / BCRC 12310 / CIP 105137 / JCM 1170 / LMG 11437 / NCIMB 947 / NCTC 947) (Lactobacillus brevis).